The sequence spans 292 residues: 2-(5''-triphosphoribosyl)-3'-dephosphocoenzyme-A synthase (292 aa).

Belongs to the CitG/MdcB family.

The catalysed reaction is 3'-dephospho-CoA + ATP = 2'-(5''-triphospho-alpha-D-ribosyl)-3'-dephospho-CoA + adenine. Its function is as follows. Catalyzes the formation of 2-(5''-triphosphoribosyl)-3'-dephosphocoenzyme-A, the precursor of the prosthetic group of the holo-acyl carrier protein (gamma chain) of citrate lyase, from ATP and dephospho-CoA. This is 2-(5''-triphosphoribosyl)-3'-dephosphocoenzyme-A synthase from Escherichia coli (strain ATCC 8739 / DSM 1576 / NBRC 3972 / NCIMB 8545 / WDCM 00012 / Crooks).